Reading from the N-terminus, the 177-residue chain is MALLPILEVPDPRLREKSTVVEVFDDNLQRLIDDMFETMYKAPGIGLAAIQVGVAKRLLVIDLQQPEEGGEAKRNPMVFINPELTPEGEEKRLYNEGCLSVPDQYAEVRRPSVINAKWQDRDGNFHEERIEGLLATCLQHEMDHLEGILFIDHLSRLKRGMLMKKLLKERKLREDSY.

Fe cation is bound by residues C98 and H140. Residue E141 is part of the active site. Residue H144 participates in Fe cation binding.

The protein belongs to the polypeptide deformylase family. The cofactor is Fe(2+).

It carries out the reaction N-terminal N-formyl-L-methionyl-[peptide] + H2O = N-terminal L-methionyl-[peptide] + formate. Its function is as follows. Removes the formyl group from the N-terminal Met of newly synthesized proteins. Requires at least a dipeptide for an efficient rate of reaction. N-terminal L-methionine is a prerequisite for activity but the enzyme has broad specificity at other positions. This is Peptide deformylase from Zymomonas mobilis subsp. mobilis (strain ATCC 31821 / ZM4 / CP4).